The sequence spans 160 residues: CXXC motif containing zinc binding protein (160 aa).

Positions 33, 36, 67, and 70 each coordinate Zn(2+).

It belongs to the UPF0587 family.

The protein is CXXC motif containing zinc binding protein (czib) of Xenopus laevis (African clawed frog).